The primary structure comprises 464 residues: Heterogeneous nuclear ribonucleoprotein K (464 aa).

At Met-1 the chain carries N-acetylmethionine. The interval 1–37 (METEQPEETFPNTETNGEFGKRPAEDMEEEQAFKRSR) is disordered. The segment at 1-276 (METEQPEETF…GRGGRPMPPS (276 aa)) is necessary for interaction with DDX1. Positions 19 to 37 (FGKRPAEDMEEEQAFKRSR) are enriched in basic and acidic residues. Lys-34 carries the N6-acetyllysine; alternate modification. Residue Lys-34 forms a Glycyl lysine isopeptide (Lys-Gly) (interchain with G-Cter in SUMO1); alternate linkage. Lys-34 is covalently cross-linked (Glycyl lysine isopeptide (Lys-Gly) (interchain with G-Cter in SUMO2); alternate). Position 36 is a phosphoserine (Ser-36). Position 39 is a phosphothreonine (Thr-39). Residues 42-104 (MVELRILLQS…ETIGEILKKI (63 aa)) form the KH 1 domain. Residues Lys-52 and Lys-60 each participate in a glycyl lysine isopeptide (Lys-Gly) (interchain with G-Cter in SUMO2) cross-link. A run of 2 repeats spans residues 54–76 (AGAVIGKGGKNIKALRTDYNASV) and 59–62 (GKGG). The segment at 54–421 (AGAVIGKGGK…QIRHESGASI (368 aa)) is 2 X 22 AA approximate repeats. The segment at 59–407 (GKGGKNIKAL…LAGSIIGKGG (349 aa)) is 5 X 4 AA repeats of G-X-G-G. Phosphoserine occurs at positions 75 and 116. Residues 144-209 (DCELRLLIHQ…DRVVECIKII (66 aa)) enclose the KH 2 domain. Lys-163 is covalently cross-linked (Glycyl lysine isopeptide (Lys-Gly) (interchain with G-Cter in SUMO1); alternate). Lys-163 is covalently cross-linked (Glycyl lysine isopeptide (Lys-Gly) (interchain with G-Cter in SUMO2); alternate). Lys-198 bears the N6-acetyllysine mark. The tract at residues 209 to 337 (ILDLISESPI…RPGDRYDGMV (129 aa)) is interaction with ZIK1. Phosphoserine occurs at positions 214 and 216. Lys-219 is covalently cross-linked (Glycyl lysine isopeptide (Lys-Gly) (interchain with G-Cter in SUMO2); alternate). Residue Lys-219 is modified to N6-succinyllysine; alternate. The RNA-binding RGG-box stretch occupies residues 236–273 (YGGFTMMFDDRRGRPVGFPMRGRGGFDRMPPGRGGRPM). A run of 3 repeats spans residues 245-250 (DRRGRP), 257-260 (GRGG), and 267-270 (GRGG). The segment at 245-329 (DRRGRPVGFP…LMAYDRRGRP (85 aa)) is 2 X 6 AA approximate repeats. The interval 250 to 329 (PVGFPMRGRG…LMAYDRRGRP (80 aa)) is disordered. The span at 252–266 (GFPMRGRGGFDRMPP) shows a compositional bias: low complexity. The span at 276–285 (SRRDYDDMSP) shows a compositional bias: basic and acidic residues. The residue at position 284 (Ser-284) is a Phosphoserine. Residues 295 to 298 (GRGG) form a 3-4 repeat. Residue Arg-316 is modified to Omega-N-methylarginine. One copy of the 2-2 repeat lies at 324–329 (DRRGRP). Residue Arg-377 is modified to Omega-N-methylarginine. Ser-379 bears the Phosphoserine mark. At Tyr-380 the chain carries Phosphotyrosine. In terms of domain architecture, KH 3 spans 387 to 451 (IITTQVTIPK…DQIQNAQYLL (65 aa)). 2 tandem repeats follow at residues 399–421 (AGSIIGKGGQRIKQIRHESGASI) and 404–407 (GKGG). At Lys-405 the chain carries N6-acetyllysine; alternate. A Glycyl lysine isopeptide (Lys-Gly) (interchain with G-Cter in SUMO2); alternate cross-link involves residue Lys-405. Phosphoserine is present on Ser-420. A Glycyl lysine isopeptide (Lys-Gly) (interchain with G-Cter in SUMO1); alternate cross-link involves residue Lys-422. A Glycyl lysine isopeptide (Lys-Gly) (interchain with G-Cter in SUMO2); alternate cross-link involves residue Lys-422. Residue Lys-422 forms a Glycyl lysine isopeptide (Lys-Gly) (interchain with G-Cter in SUMO); alternate linkage.

As to quaternary structure, identified in the spliceosome C complex. Interacts with ANKRD28, RBM42 and ZIK1. Interacts with DDX1. Interacts with MDM2; this interaction leads to ubiquitination and proteasomal degradation. Interacts with p53/TP53. Interacts with BRDT. Interacts with IVNS1ABP. Interacts with PPIA/CYPA. Part of a transcription inhibitory ribonucleoprotein complex composed at least of the circular RNA circZNF827, ZNF827 and HNRNPL. In terms of processing, sumoylated by CBX4. Sumoylation is increased upon DNA damage, such as that produced by doxorubicin, etoposide, UV light and camptothecin, due to enhanced CBX4 phosphorylation by HIPK2 under these conditions. Post-translationally, ubiquitinated by MDM2. Doxorubicin treatment does not affect monoubiquitination, but slightly decreases HNRNPK poly-ubiquitination. O-glycosylated (O-GlcNAcylated), in a cell cycle-dependent manner.

The protein localises to the cytoplasm. It is found in the nucleus. It localises to the nucleoplasm. Its subcellular location is the cell projection. The protein resides in the podosome. Its function is as follows. One of the major pre-mRNA-binding proteins. Binds tenaciously to poly(C) sequences. Likely to play a role in the nuclear metabolism of hnRNAs, particularly for pre-mRNAs that contain cytidine-rich sequences. Can also bind poly(C) single-stranded DNA. Plays an important role in p53/TP53 response to DNA damage, acting at the level of both transcription activation and repression. When sumoylated, acts as a transcriptional coactivator of p53/TP53, playing a role in p21/CDKN1A and 14-3-3 sigma/SFN induction. As far as transcription repression is concerned, acts by interacting with long intergenic RNA p21 (lincRNA-p21), a non-coding RNA induced by p53/TP53. This interaction is necessary for the induction of apoptosis, but not cell cycle arrest. As part of a ribonucleoprotein complex composed at least of ZNF827, HNRNPL and the circular RNA circZNF827 that nucleates the complex on chromatin, may negatively regulate the transcription of genes involved in neuronal differentiation. In Bos taurus (Bovine), this protein is Heterogeneous nuclear ribonucleoprotein K (HNRNPK).